Here is a 1363-residue protein sequence, read N- to C-terminus: ABC multidrug transporter MDR2 (1363 aa).

A helical membrane pass occupies residues isoleucine 65–leucine 85. Residues valine 69 to serine 367 enclose the ABC transmembrane type-1 1 domain. N-linked (GlcNAc...) asparagine glycosylation occurs at asparagine 97. A run of 5 helical transmembrane segments spans residues valine 119 to cysteine 139, lysine 193 to leucine 213, valine 215 to glycine 235, isoleucine 301 to glycine 321, and valine 336 to serine 356. The region spanning isoleucine 403 to leucine 682 is the ABC transporter 1 domain. Glycine 438–serine 445 is a binding site for ATP. Asparagine 552 and asparagine 633 each carry an N-linked (GlcNAc...) asparagine glycan. Residues tyrosine 738–lysine 758 form a disordered region. 3 consecutive transmembrane segments (helical) span residues leucine 781–glycine 801, glycine 820–valine 840, and leucine 896–isoleucine 916. One can recognise an ABC transmembrane type-1 2 domain in the interval leucine 781 to lysine 1052. Residue asparagine 973 is glycosylated (N-linked (GlcNAc...) asparagine). Helical transmembrane passes span phenylalanine 992 to glycine 1012 and isoleucine 1016 to serine 1036. The ABC transporter 2 domain maps to valine 1119 to histidine 1358. Glycine 1154–serine 1161 contributes to the ATP binding site.

Belongs to the ABC transporter superfamily. ABCB family. Multidrug resistance exporter (TC 3.A.1.201) subfamily.

It localises to the cell membrane. Its function is as follows. Pleiotropic ABC efflux transporter that may be involved in the modulation susceptibility to a wide range of unrelated cytotoxic compounds. The polypeptide is ABC multidrug transporter MDR2 (Trichophyton tonsurans (strain CBS 112818) (Scalp ringworm fungus)).